Reading from the N-terminus, the 338-residue chain is DNA-directed RNA polymerase subunit alpha (338 aa).

Positions 1–225 are alpha N-terminal domain (alpha-NTD); the sequence is MLISQRPTIT…ELFGLARELN (225 aa). Positions 240 to 338 are alpha C-terminal domain (alpha-CTD); that stretch reads TEYIAAYSMP…YIDVEAEDSE (99 aa). The segment at 319–338 is disordered; it reads LEGYDAETGGYIDVEAEDSE.

It belongs to the RNA polymerase alpha chain family. As to quaternary structure, homodimer. The RNAP catalytic core consists of 2 alpha, 1 beta, 1 beta' and 1 omega subunit. When a sigma factor is associated with the core the holoenzyme is formed, which can initiate transcription.

The enzyme catalyses RNA(n) + a ribonucleoside 5'-triphosphate = RNA(n+1) + diphosphate. Functionally, DNA-dependent RNA polymerase catalyzes the transcription of DNA into RNA using the four ribonucleoside triphosphates as substrates. The sequence is that of DNA-directed RNA polymerase subunit alpha from Corynebacterium glutamicum (strain R).